We begin with the raw amino-acid sequence, 669 residues long: Dymeclin (669 aa).

A lipid anchor (N-myristoyl glycine) is attached at Gly-2.

It belongs to the dymeclin family. In terms of assembly, interacts with GOLM1 and PPIB. Myristoylated in vitro; myristoylation is not essential for protein targeting to Golgi compartment. Expressed in most embryo-fetal and adult tissues. Abundant in primary chondrocytes, osteoblasts, cerebellum, kidney, lung, stomach, heart, pancreas and fetal brain. Very low or no expression in the spleen, thymus, esophagus, bladder and thyroid gland.

The protein resides in the cytoplasm. Its subcellular location is the golgi apparatus. It is found in the membrane. Necessary for correct organization of Golgi apparatus. Involved in bone development. The chain is Dymeclin (DYM) from Homo sapiens (Human).